A 1012-amino-acid chain; its full sequence is Vacuolar membrane protease (1012 aa).

Residues 1 to 60 (MRRSTDPRNLLVRRGPLLVDGESAISELDPGFFPTGDAPKMSSTTRRRFNLIAFTPGPVT) lie on the Cytoplasmic side of the membrane. Residues 61 to 81 (VISSLVYLALLIPLLLVHTIV) form a helical membrane-spanning segment. At 82–432 (PSAPKSNPKG…SFAVFRLHTL (351 aa)) the chain is on the vacuolar side. Asn159 is a glycosylation site (N-linked (GlcNAc...) asparagine). Zn(2+) contacts are provided by His215 and Asp227. Catalysis depends on Glu261, which acts as the Proton acceptor. Glu262, Glu287, and His360 together coordinate Zn(2+). Residues 433–453 (FAISVTLLVVCPIVLFVIGII) traverse the membrane as a helical segment. Residues 454–487 (LSKMDKMYLFSIHETIPETKEKVSVRGLRGLFRY) lie on the Cytoplasmic side of the membrane. Residues 488-508 (PIILVVSSGILIGLSYLLAKV) form a helical membrane-spanning segment. The Vacuolar segment spans residues 509-518 (NPFIVHSSSY). Residues 519-539 (AVWSMMLSSWIFMTWFLSCIA) form a helical membrane-spanning segment. Over 540–550 (DFFRPSALHRA) the chain is Cytoplasmic. A helical transmembrane segment spans residues 551–571 (YTFTWQLLVMWVLLVISTVYV). Over 572 to 575 (NQHD) the chain is Vacuolar. A helical membrane pass occupies residues 576–596 (IAAGYFIVFYFAGTFLATLIS). Over 597-710 (YLELFALPNK…WSASLPTWTW (114 aa)) the chain is Cytoplasmic. A compositionally biased stretch (polar residues) spans 614–629 (SQYPSRLGSNRSSRIL). The interval 614-660 (SQYPSRLGSNRSSRILSPSADELPTGGDNNGEIYDGEEEPTESSSLL) is disordered. A helical membrane pass occupies residues 711-731 (VLQFLFVGPVVIMFIGQLGLF). The Vacuolar segment spans residues 732–743 (LTSAMNQVGADG). The chain crosses the membrane as a helical span at residues 744–764 (VGLLVVYIAIAVFSVLLLIPL). Residues 765–777 (SPFIHRFTYHVPT) are Cytoplasmic-facing. Residues 778–798 (FLLLVFIATLIYNLAAFPFSA) traverse the membrane as a helical segment. The Vacuolar segment spans residues 799-1012 (ENRLKIFFVQ…DGLVEVSRGF (214 aa)). N-linked (GlcNAc...) asparagine glycosylation is found at Asn842 and Asn878.

The protein belongs to the peptidase M28 family. Requires Zn(2+) as cofactor.

It is found in the vacuole membrane. May be involved in vacuolar sorting and osmoregulation. This is Vacuolar membrane protease from Coccidioides posadasii (strain RMSCC 757 / Silveira) (Valley fever fungus).